The sequence spans 1040 residues: Activated CDC42 kinase 1 (1040 aa).

Positions 1-110 (MQPEEGTGWL…PSPTPGGLAG (110 aa)) are SAM-like domain. The tract at residues 86–109 (EAEFPSHHSQSTFRKPSPTPGGLA) is disordered. Threonine 113 is subject to Phosphothreonine. One can recognise a Protein kinase domain in the interval 126–385 (LRLLEKLGDG…PTFVALRDFL (260 aa)). ATP is bound by residues 132–140 (LGDGSFGVV) and lysine 158. Aspartate 252 acts as the Proton acceptor in catalysis. Phosphotyrosine; by SRC and autocatalysis is present on tyrosine 284. Positions 388-448 (AQPTDMRALQ…PRNVVTSVAG (61 aa)) constitute an SH3 domain. A disordered region spans residues 505 to 527 (RPTQHLGRMKKPTYDPVSEDPDP). Tyrosine 518 carries the phosphotyrosine modification. The interval 623–652 (DWDARPLPPPPAYDDVAQDEDDFEVCSINS) is required for interaction with SRC. Residues 632–635 (PPAY) are required for interaction with NEDD4. Residues 722 to 824 (TGQLTPSPTP…MPTTQSFASD (103 aa)) are disordered. The segment at 733–876 (GDDKPQVPPR…PYLERYQRFL (144 aa)) is EBD domain. 2 stretches are compositionally biased toward pro residues: residues 738-749 (QVPPRVPIPPRP) and 772-783 (PSSPPRVPPREP). Positions 802–812 (PLPHRLSSSPG) are enriched in low complexity. The residue at position 827 (tyrosine 827) is a Phosphotyrosine. An Omega-N-methylarginine modification is found at arginine 839. Tyrosine 859 and tyrosine 872 each carry phosphotyrosine. Serine 881 carries the phosphoserine modification. The tract at residues 881 to 957 (SPEEPAALPV…CPGDGQEAAR (77 aa)) is disordered. The span at 888-903 (LPVPPLLPPPSTPAPA) shows a compositional bias: pro residues. A compositionally biased stretch (polar residues) spans 922–931 (NFSTNNSNPG). The 41-residue stretch at 958 to 998 (PADKVQMLQAMVHGVTTEECQAALRSHSWSIQRAAQYLKVE) folds into the UBA domain.

Belongs to the protein kinase superfamily. Tyr protein kinase family. Homodimer. Interacts with CDC42. Interacts with CSPG4 (activated). Interacts with MERTK (activated); stimulates autophosphorylation. May interact (phosphorylated) with HSP90AB1; maintains kinase activity. Interacts with NPHP1. Interacts with SNX9 (via SH3 domain). Interacts with SRC (via SH2 and SH3 domain). Interacts with EGFR, and this interaction is dependent on EGF stimulation and kinase activity of EGFR. Interacts (via kinase domain) with AKT1. Part of a collagen stimulated complex involved in cell migration composed of CDC42, CRK, TNK2 and BCAR1/p130cas. Interacts with BCAR1/p130cas via SH3 domains. Forms complexes with GRB2 and numerous receptor tyrosine kinases (RTK) including LTK, AXL or PDGFRL, in which GRB2 promotes RTK recruitment by TNK2. Interacts with NEDD4 (via WW3 domain). NEDD4L and EGF promote association with NEDD4. It depends on Mg(2+) as a cofactor. Post-translationally, autophosphorylation regulates kinase activity. Phosphorylation on Tyr-518 is required for interaction with SRC and is observed during association with clathrin-coated pits. In terms of processing, polyubiquitinated by NEDD4 and NEDD4L. Degradation can be induced by EGF and is lysosome-dependent.

It is found in the cell membrane. Its subcellular location is the nucleus. The protein resides in the endosome. It localises to the cell junction. The protein localises to the adherens junction. It is found in the cytoplasmic vesicle membrane. Its subcellular location is the cytoplasmic vesicle. The protein resides in the clathrin-coated vesicle. It localises to the membrane. The protein localises to the clathrin-coated pit. It is found in the cytoplasm. Its subcellular location is the cytosol. The catalysed reaction is L-tyrosyl-[protein] + ATP = O-phospho-L-tyrosyl-[protein] + ADP + H(+). The enzyme catalyses L-seryl-[protein] + ATP = O-phospho-L-seryl-[protein] + ADP + H(+). It catalyses the reaction L-threonyl-[protein] + ATP = O-phospho-L-threonyl-[protein] + ADP + H(+). Non-receptor tyrosine-protein and serine/threonine-protein kinase that is implicated in cell spreading and migration, cell survival, cell growth and proliferation. Transduces extracellular signals to cytosolic and nuclear effectors. Phosphorylates AKT1, AR, MCF2, WASL and WWOX. Implicated in trafficking and clathrin-mediated endocytosis through binding to epidermal growth factor receptor (EGFR) and clathrin. Binds to both poly- and mono-ubiquitin and regulates ligand-induced degradation of EGFR, thereby contributing to the accumulation of EGFR at the limiting membrane of early endosomes. Downstream effector of CDC42 which mediates CDC42-dependent cell migration via phosphorylation of BCAR1. May be involved both in adult synaptic function and plasticity and in brain development. Activates AKT1 by phosphorylating it on 'Tyr-176'. Phosphorylates AR on 'Tyr-267' and 'Tyr-363', thereby promoting its recruitment to androgen-responsive enhancers (AREs). Phosphorylates WWOX on 'Tyr-287'. Phosphorylates MCF2, thereby enhancing its activity as a guanine nucleotide exchange factor (GEF) toward Rho family proteins. Contributes to the control of AXL receptor levels. Confers metastatic properties on cancer cells and promotes tumor growth by negatively regulating tumor suppressor such as WWOX and positively regulating pro-survival factors such as AKT1 and AR. The sequence is that of Activated CDC42 kinase 1 from Rattus norvegicus (Rat).